The following is a 172-amino-acid chain: Adenine phosphoribosyltransferase (172 aa).

This sequence belongs to the purine/pyrimidine phosphoribosyltransferase family. Homodimer.

It localises to the cytoplasm. It catalyses the reaction AMP + diphosphate = 5-phospho-alpha-D-ribose 1-diphosphate + adenine. It functions in the pathway purine metabolism; AMP biosynthesis via salvage pathway; AMP from adenine: step 1/1. Functionally, catalyzes a salvage reaction resulting in the formation of AMP, that is energically less costly than de novo synthesis. The polypeptide is Adenine phosphoribosyltransferase (Microcystis aeruginosa (strain NIES-843 / IAM M-2473)).